The following is a 317-amino-acid chain: 3',5'-bisphosphate nucleotidase (317 aa).

Asp-46 serves as the catalytic Proton acceptor. The Mg(2+) site is built by Glu-69, Asp-118, Ile-120, and Asp-121. Thr-123 (proton acceptor) is an active-site residue. Residue Thr-123 coordinates adenosine 3',5'-bisphosphate. AMP-binding residues include Ser-198, His-203, Ser-227, Lys-230, Arg-244, Tyr-251, and Asp-257. Residues His-203, Ser-227, Lys-230, and Arg-244 each contribute to the adenosine 3',5'-bisphosphate site. Asp-257 lines the Mg(2+) pocket. Asp-257 provides a ligand contact to adenosine 3',5'-bisphosphate.

It belongs to the inositol monophosphatase superfamily. As to quaternary structure, monomer. It depends on Mg(2+) as a cofactor.

It is found in the cytoplasm. It catalyses the reaction adenosine 3',5'-bisphosphate + H2O = AMP + phosphate. The enzyme catalyses 1D-myo-inositol 1,4-bisphosphate + H2O = 1D-myo-inositol 4-phosphate + phosphate. Its activity is regulated as follows. Inhibited by Li(2+). Phosphatase that converts 3'-phosphoadenosine 5'-phosphate (PAP) to AMP. Is also able to hydrolyze inositol 1,4-bisphosphate but with less efficiency. In Entamoeba histolytica (strain ATCC 30459 / HM-1:IMSS / ABRM), this protein is 3',5'-bisphosphate nucleotidase.